The chain runs to 396 residues: Phosphopentomutase (396 aa).

Mn(2+) is bound by residues Asp13, Asp288, His293, Asp329, His330, and His341.

The protein belongs to the phosphopentomutase family. It depends on Mn(2+) as a cofactor.

It is found in the cytoplasm. It catalyses the reaction 2-deoxy-alpha-D-ribose 1-phosphate = 2-deoxy-D-ribose 5-phosphate. The enzyme catalyses alpha-D-ribose 1-phosphate = D-ribose 5-phosphate. It participates in carbohydrate degradation; 2-deoxy-D-ribose 1-phosphate degradation; D-glyceraldehyde 3-phosphate and acetaldehyde from 2-deoxy-alpha-D-ribose 1-phosphate: step 1/2. In terms of biological role, isomerase that catalyzes the conversion of deoxy-ribose 1-phosphate (dRib-1-P) and ribose 1-phosphate (Rib-1-P) to deoxy-ribose 5-phosphate (dRib-5-P) and ribose 5-phosphate (Rib-5-P), respectively. The polypeptide is Phosphopentomutase (Clostridium botulinum (strain Alaska E43 / Type E3)).